The sequence spans 638 residues: Protein NSP-INTERACTING KINASE 1 (638 aa).

Residues 1–31 (MESTIVMMMMITRSFFCFLGFLCLLCSSVHG) form the signal peptide. Residues 32 to 248 (LLSPKGVNFE…AGGSRNHKMA (217 aa)) lie on the Extracellular side of the membrane. N-linked (GlcNAc...) asparagine glycans are attached at residues N92 and N103. LRR repeat units follow at residues 104-128 (LTNL…IGRL), 130-152 (RLET…VGYL), 153-175 (QSLQ…SLSN), and 177-200 (TQLA…AAKT). Residues N162, N175, N188, N219, and N231 are each glycosylated (N-linked (GlcNAc...) asparagine). The chain crosses the membrane as a helical span at residues 249 to 269 (IAVGSSVGTVSLIFIAVGLFL). Residues 270–638 (WWRQRHNQNT…VQAMELSGPR (369 aa)) are Cytoplasmic-facing. A Phosphothreonine modification is found at T309. The 282-residue stretch at 312–593 (FSSKNLLGKG…EGDGLAEKWE (282 aa)) folds into the Protein kinase domain. Residue 318–326 (LGKGGYGNV) participates in ATP binding. A Phosphothreonine modification is found at T335. ATP is bound at residue K340. Residues S393 and S396 each carry the phosphoserine modification. An interaction with geminivirus NSP protein region spans residues 422 to 502 (YLHEQCDPKI…DVFGFGILLL (81 aa)). D435 (proton acceptor) is an active-site residue. Phosphothreonine is present on residues T468, T469, and T474. Position 482 is a phosphotyrosine (Y482). At S484 the chain carries Phosphoserine. T485 carries the post-translational modification Phosphothreonine. Residue S489 is modified to Phosphoserine. A Phosphothreonine modification is found at T566.

It belongs to the protein kinase superfamily. Ser/Thr protein kinase family. Oligomer. Interacts with geminivirus nuclear shuttle protein (NSP). Interacts with RPL10A and RPL18B. Autophosphorylated. In terms of tissue distribution, expressed in seedlings, leaves, roots, stems and flowers.

It localises to the cell membrane. It catalyses the reaction L-seryl-[protein] + ATP = O-phospho-L-seryl-[protein] + ADP + H(+). The enzyme catalyses L-threonyl-[protein] + ATP = O-phospho-L-threonyl-[protein] + ADP + H(+). Inhibited by the viral nuclear shuttle protein (NSP) that binds to the region required for oligomerization. Its function is as follows. Involved in defense response to geminivirus and begomovirus infection via regulation of the nuclear trafficking of RPL10A. Phosphorylates RPL10A in vitro. Activation of NIK1 down-regulates cytosolic translation. The chain is Protein NSP-INTERACTING KINASE 1 from Arabidopsis thaliana (Mouse-ear cress).